Consider the following 891-residue polypeptide: Tubulin polyglutamylase TTLL6 (891 aa).

Disordered stretches follow at residues Met1–Ala25 and Ser44–Lys106. Basic and acidic residues predominate over residues Ser63–Glu76. Low complexity predominate over residues Gly88–Gln99. The 344-residue stretch at Lys106–Glu449 folds into the TTL domain. ATP-binding positions include Lys223, Gln229–Gly230, Gln251–Ile254, and Lys264–Asp266. Residue Gln229 participates in a protein binding. Residue Arg290 participates in L-glutamate binding. Residue Thr312–Asn313 coordinates ATP. Positions 314, 315, and 332 each coordinate L-glutamate. Asp395, Glu408, and Asn410 together coordinate Mg(2+). His411 contributes to the a protein binding site. The tract at residues Arg420–Ser499 is c-MTBD region. Lys426 is a binding site for L-glutamate. 4 disordered regions span residues Gln546–Ala584, Gly607–Ala636, Thr687–Ser711, and Asn800–Gly820. The span at Thr687–Pro699 shows a compositional bias: polar residues.

It belongs to the tubulin--tyrosine ligase family. In terms of assembly, found in a complex with CEP41. Mg(2+) is required as a cofactor.

It is found in the cytoplasm. The protein resides in the cytoskeleton. The protein localises to the cilium axoneme. Its subcellular location is the cilium basal body. The enzyme catalyses L-glutamyl-[protein] + L-glutamate + ATP = gamma-L-glutamyl-L-glutamyl-[protein] + ADP + phosphate + H(+). It catalyses the reaction (L-glutamyl)(n)-gamma-L-glutamyl-L-glutamyl-[protein] + L-glutamate + ATP = (L-glutamyl)(n+1)-gamma-L-glutamyl-L-glutamyl-[protein] + ADP + phosphate + H(+). Functionally, polyglutamylase which modifies both tubulin and non-tubulin proteins, generating alpha-linked polyglutamate side chains on the gamma-carboxyl group of specific glutamate residues of target proteins. Preferentially mediates ATP-dependent long polyglutamate chain elongation over the initiation step of the polyglutamylation reaction. Preferentially modifies the alpha-tubulin tail over a beta-tail. Promotes tubulin polyglutamylation which stimulates spastin/SPAST-mediated microtubule severing, thereby regulating microtubule functions. Mediates microtubule polyglutamylation in primary cilia axoneme, which is important for ciliary structural formation and motility. Mediates microtubule polyglutamylation in motile cilia, necessary for the regulation of ciliary coordinated beating. Polyglutamylates non-tubulin protein nucleotidyltransferase CGAS, leading to CGAS DNA-binding inhibition, thereby preventing antiviral defense response. In Homo sapiens (Human), this protein is Tubulin polyglutamylase TTLL6.